A 274-amino-acid polypeptide reads, in one-letter code: Eukaryotic translation initiation factor 3 subunit G (274 aa).

A phosphoserine mark is found at Ser-146, Ser-164, and Ser-171. A disordered region spans residues 149 to 170 (ANTSAAATPEPDTDASGKYVPP). One can recognise an RRM domain in the interval 191–270 (TTLKISQLNT…LILHLEWPKK (80 aa)).

The protein belongs to the eIF-3 subunit G family. Component of the eukaryotic translation initiation factor 3 (eIF-3) complex.

It is found in the cytoplasm. In terms of biological role, RNA-binding component of the eukaryotic translation initiation factor 3 (eIF-3) complex, which is involved in protein synthesis of a specialized repertoire of mRNAs and, together with other initiation factors, stimulates binding of mRNA and methionyl-tRNAi to the 40S ribosome. The eIF-3 complex specifically targets and initiates translation of a subset of mRNAs involved in cell proliferation. This subunit can bind 18S rRNA. The chain is Eukaryotic translation initiation factor 3 subunit G from Meyerozyma guilliermondii (strain ATCC 6260 / CBS 566 / DSM 6381 / JCM 1539 / NBRC 10279 / NRRL Y-324) (Yeast).